The chain runs to 180 residues: MAEDDMVSLLFKLKVEDVTCSDDPEKHMKNASNERKPLIEPVENQLMDIGEEGGSLDYWLLYLYVDCLTMMCCFHRGSLPYNWMQGALLTNLPSYQHDVTLDEVNRGLKSASDFFGYVDPMRSDYFTAFSFPGRVTKLNEQMELTSTKGRCLKFDLYASTQLRFKPGELVRHGECKFAIG.

Functionally, hydrolyzes cytokinin glucosides thus liberating free cytokinins. This is Cytokinin-beta-glucosidase 1 (ROLC1) from Linaria vulgaris (Toadflax).